A 512-amino-acid polypeptide reads, in one-letter code: ATP synthase subunit alpha (512 aa).

Gly-169 to Thr-176 contributes to the ATP binding site.

The protein belongs to the ATPase alpha/beta chains family. As to quaternary structure, F-type ATPases have 2 components, CF(1) - the catalytic core - and CF(0) - the membrane proton channel. CF(1) has five subunits: alpha(3), beta(3), gamma(1), delta(1), epsilon(1). CF(0) has three main subunits: a(1), b(2) and c(9-12). The alpha and beta chains form an alternating ring which encloses part of the gamma chain. CF(1) is attached to CF(0) by a central stalk formed by the gamma and epsilon chains, while a peripheral stalk is formed by the delta and b chains.

The protein resides in the cell inner membrane. It carries out the reaction ATP + H2O + 4 H(+)(in) = ADP + phosphate + 5 H(+)(out). Its function is as follows. Produces ATP from ADP in the presence of a proton gradient across the membrane. The alpha chain is a regulatory subunit. The polypeptide is ATP synthase subunit alpha (Aromatoleum aromaticum (strain DSM 19018 / LMG 30748 / EbN1) (Azoarcus sp. (strain EbN1))).